Consider the following 209-residue polypeptide: 2,3-bisphosphoglycerate-dependent phosphoglycerate mutase (209 aa).

Residues 8-15 (RHGQSEGN), 21-22 (TG), Arg-60, 87-90 (ERDY), Lys-98, 114-115 (RR), and 158-159 (GN) each bind substrate. The Tele-phosphohistidine intermediate role is filled by His-9. The active-site Proton donor/acceptor is Glu-87.

Belongs to the phosphoglycerate mutase family. BPG-dependent PGAM subfamily. In terms of assembly, homodimer.

It catalyses the reaction (2R)-2-phosphoglycerate = (2R)-3-phosphoglycerate. The protein operates within carbohydrate degradation; glycolysis; pyruvate from D-glyceraldehyde 3-phosphate: step 3/5. Its function is as follows. Catalyzes the interconversion of 2-phosphoglycerate and 3-phosphoglycerate. The polypeptide is 2,3-bisphosphoglycerate-dependent phosphoglycerate mutase (Rhizobium etli (strain ATCC 51251 / DSM 11541 / JCM 21823 / NBRC 15573 / CFN 42)).